A 272-amino-acid chain; its full sequence is Sugar-phosphatase AraL (272 aa).

This sequence belongs to the HAD-like hydrolase superfamily. Mg(2+) is required as a cofactor.

It catalyses the reaction sugar phosphate + H2O = sugar + phosphate.. The enzyme catalyses O-phospho-L-serine + H2O = L-serine + phosphate. It carries out the reaction O-phospho-D-serine + H2O = D-serine + phosphate. Catalyzes the dephosphorylation of C5 and C6 carbon sugars in vitro. Catalyzes the dephosphorylation of 3'-AMP and phosphoserine in vitro. The polypeptide is Sugar-phosphatase AraL (araL) (Bacillus subtilis (strain 168)).